Here is a 447-residue protein sequence, read N- to C-terminus: Probable glycine dehydrogenase (decarboxylating) subunit 1 (447 aa).

This sequence belongs to the GcvP family. N-terminal subunit subfamily. As to quaternary structure, the glycine cleavage system is composed of four proteins: P, T, L and H. In this organism, the P 'protein' is a heterodimer of two subunits.

The enzyme catalyses N(6)-[(R)-lipoyl]-L-lysyl-[glycine-cleavage complex H protein] + glycine + H(+) = N(6)-[(R)-S(8)-aminomethyldihydrolipoyl]-L-lysyl-[glycine-cleavage complex H protein] + CO2. In terms of biological role, the glycine cleavage system catalyzes the degradation of glycine. The P protein binds the alpha-amino group of glycine through its pyridoxal phosphate cofactor; CO(2) is released and the remaining methylamine moiety is then transferred to the lipoamide cofactor of the H protein. The chain is Probable glycine dehydrogenase (decarboxylating) subunit 1 from Bacillus cereus (strain G9842).